Reading from the N-terminus, the 894-residue chain is Exocyst complex component 1 (894 aa).

2 coiled-coil regions span residues 152–199 and 205–259; these read GDEE…LQVL and QSIM…NHLI. Residues 437-495 are disordered; the sequence is SKESKKFATLPRKESAVKQETESLHGSSGKLTGSTSSLNKLSVQSSGSRRSQSSSLLDM. Residues 438-459 are compositionally biased toward basic and acidic residues; that stretch reads KESKKFATLPRKESAVKQETES. Low complexity predominate over residues 460-491; sequence LHGSSGKLTGSTSSLNKLSVQSSGSRRSQSSS. A Phosphoserine modification is found at S470. T471 is modified (phosphothreonine). Phosphoserine is present on residues S473, S487, and S501.

The protein belongs to the SEC3 family. The exocyst complex is composed of EXOC1, EXOC2, EXOC3, EXOC4, EXOC5, EXOC6, EXOC7 and EXOC8. Interacts with EEF1A1. Interacts with SLC6A9; interaction increases the transporter capacity of SLC6A9 probably by promoting its insertion into the cell membrane.

It localises to the midbody. Its subcellular location is the midbody ring. It is found in the cytoplasm. The protein localises to the perinuclear region. The protein resides in the cell membrane. In terms of biological role, component of the exocyst complex involved in the docking of exocytic vesicles with fusion sites on the plasma membrane. The polypeptide is Exocyst complex component 1 (Exoc1) (Mus musculus (Mouse)).